We begin with the raw amino-acid sequence, 481 residues long: Uridine 5'-monophosphate synthase (481 aa).

The tract at residues 1–214 is OPRTase; the sequence is MEVASQALGP…VFSAANHNGL (214 aa). Phosphotyrosine is present on Y37. The tract at residues 215-220 is domain linker; sequence PPPEKK. An OMPdecase region spans residues 221-481; the sequence is ACKELSFGAR…EAYLSRLAVQ (261 aa). Residue S257 participates in orotidine 5'-phosphate binding. Residues S257, D259, and 281 to 283 each bind UMP; that span reads KTH. Orotidine 5'-phosphate-binding positions include K281, K314, D317, T321, S372, 430-432, and 450-451; these read QQY and GR. Active-site for OMPdecase activity residues include K314 and D317. UMP is bound by residues D317, T321, S372, 430-432, and 450-451; these read QQY and GR.

It in the N-terminal section; belongs to the purine/pyrimidine phosphoribosyltransferase family. This sequence in the C-terminal section; belongs to the OMP decarboxylase family. In terms of assembly, homodimer; dimerization is required for enzymatic activity.

The enzyme catalyses orotidine 5'-phosphate + diphosphate = orotate + 5-phospho-alpha-D-ribose 1-diphosphate. It catalyses the reaction orotidine 5'-phosphate + H(+) = UMP + CO2. The protein operates within pyrimidine metabolism; UMP biosynthesis via de novo pathway; UMP from orotate: step 1/2. It participates in pyrimidine metabolism; UMP biosynthesis via de novo pathway; UMP from orotate: step 2/2. Functionally, bifunctional enzyme catalyzing the last two steps of de novo pyrimidine biosynthesis, orotate phosphoribosyltransferase (OPRT), which converts orotate to orotidine-5'-monophosphate (OMP), and orotidine-5'-monophosphate decarboxylase (ODC), the terminal enzymatic reaction that decarboxylates OMP to uridine monophosphate (UMP). The protein is Uridine 5'-monophosphate synthase (Umps) of Mus musculus (Mouse).